The chain runs to 375 residues: tRNA/tmRNA (uracil-C(5))-methyltransferase (375 aa).

Positions 197, 225, 230, 246, and 306 each coordinate S-adenosyl-L-methionine. Cys-331 serves as the catalytic Nucleophile. Glu-365 serves as the catalytic Proton acceptor.

It belongs to the class I-like SAM-binding methyltransferase superfamily. RNA M5U methyltransferase family. TrmA subfamily.

It catalyses the reaction uridine(54) in tRNA + S-adenosyl-L-methionine = 5-methyluridine(54) in tRNA + S-adenosyl-L-homocysteine + H(+). The catalysed reaction is uridine(341) in tmRNA + S-adenosyl-L-methionine = 5-methyluridine(341) in tmRNA + S-adenosyl-L-homocysteine + H(+). In terms of biological role, dual-specificity methyltransferase that catalyzes the formation of 5-methyluridine at position 54 (m5U54) in all tRNAs, and that of position 341 (m5U341) in tmRNA (transfer-mRNA). The chain is tRNA/tmRNA (uracil-C(5))-methyltransferase from Aliarcobacter butzleri (strain RM4018) (Arcobacter butzleri).